The chain runs to 355 residues: Peptide chain release factor 1 (355 aa).

Residue Q233 is modified to N5-methylglutamine.

This sequence belongs to the prokaryotic/mitochondrial release factor family. Methylated by PrmC. Methylation increases the termination efficiency of RF1.

Its subcellular location is the cytoplasm. Functionally, peptide chain release factor 1 directs the termination of translation in response to the peptide chain termination codons UAG and UAA. This is Peptide chain release factor 1 from Desulfitobacterium hafniense (strain DSM 10664 / DCB-2).